The chain runs to 413 residues: Peptide chain release factor 1, mitochondrial (413 aa).

A mitochondrion-targeting transit peptide spans 1-40 (MRVLIRPNFLSNLIRYCSRGTHSHDRSLRSVLSSNMIRLY). Gln-287 is modified (N5-methylglutamine).

The protein belongs to the prokaryotic/mitochondrial release factor family. Methylation increases the termination efficiency of RF1. As to expression, mostly expressed in seedlings, stems and adult plants, and, to a lower extent, in siliques. Barely detected in etiolated seedlings and roots.

It localises to the mitochondrion. Functionally, peptide chain release factor 1 directs the termination of translation in response to the peptide chain termination codons UAG and UAA in mitochondria. This chain is Peptide chain release factor 1, mitochondrial, found in Arabidopsis thaliana (Mouse-ear cress).